The chain runs to 259 residues: Cytosolic Fe-S cluster assembly factor Nubp2 homolog (259 aa).

Residue 14–21 (GKGGVGKS) participates in ATP binding. [4Fe-4S] cluster contacts are provided by Cys188 and Cys191.

It belongs to the Mrp/NBP35 ATP-binding proteins family. NUBP2/CFD1 subfamily. As to quaternary structure, heterotetramer of 2 Nubp1 and 2 Nubp2 chains. Requires [4Fe-4S] cluster as cofactor.

The protein localises to the cytoplasm. In terms of biological role, component of the cytosolic iron-sulfur (Fe/S) protein assembly (CIA) machinery. Required for maturation of extramitochondrial Fe-S proteins. The Nubp1-Nubp2 heterotetramer forms a Fe-S scaffold complex, mediating the de novo assembly of an Fe-S cluster and its transfer to target apoproteins. In Anopheles gambiae (African malaria mosquito), this protein is Cytosolic Fe-S cluster assembly factor Nubp2 homolog.